Reading from the N-terminus, the 321-residue chain is Tyrosine recombinase XerC (321 aa).

One can recognise a Core-binding (CB) domain in the interval 16 to 107 (SDIGQQIVRW…GLRSFARFLE (92 aa)). A Tyr recombinase domain is found at 128-315 (SVPKPIHMSA…DSERLLDVYR (188 aa)). Catalysis depends on residues Arg-173, Lys-199, His-267, Arg-270, and His-293. The O-(3'-phospho-DNA)-tyrosine intermediate role is filled by Tyr-302.

The protein belongs to the 'phage' integrase family. XerC subfamily. Forms a cyclic heterotetrameric complex composed of two molecules of XerC and two molecules of XerD.

The protein resides in the cytoplasm. In terms of biological role, site-specific tyrosine recombinase, which acts by catalyzing the cutting and rejoining of the recombining DNA molecules. The XerC-XerD complex is essential to convert dimers of the bacterial chromosome into monomers to permit their segregation at cell division. It also contributes to the segregational stability of plasmids. This Nitrobacter winogradskyi (strain ATCC 25391 / DSM 10237 / CIP 104748 / NCIMB 11846 / Nb-255) protein is Tyrosine recombinase XerC.